Reading from the N-terminus, the 396-residue chain is Diphosphomevalonate decarboxylase (396 aa).

(R)-5-diphosphomevalonate contacts are provided by residues 19–22, Arg-74, 153–158, and Thr-209; these read YWGK and SGSACR.

Belongs to the diphosphomevalonate decarboxylase family. Homodimer.

It carries out the reaction (R)-5-diphosphomevalonate + ATP = isopentenyl diphosphate + ADP + phosphate + CO2. It functions in the pathway isoprenoid biosynthesis; isopentenyl diphosphate biosynthesis via mevalonate pathway; isopentenyl diphosphate from (R)-mevalonate: step 3/3. Diphosphomevalonate decarboxylase; part of the second module of ergosterol biosynthesis pathway that includes the middle steps of the pathway. MVD1/ERG19 converts diphosphomevalonate into isopentenyl diphosphate. The second module is carried out in the vacuole and involves the formation of farnesyl diphosphate, which is also an important intermediate in the biosynthesis of ubiquinone, dolichol, heme and prenylated proteins. Activity by the mevalonate kinase ERG12 first converts mevalonate into 5-phosphomevalonate. 5-phosphomevalonate is then further converted to 5-diphosphomevalonate by the phosphomevalonate kinase ERG8. The diphosphomevalonate decarboxylase MVD1/ERG19 then produces isopentenyl diphosphate. The isopentenyl-diphosphate delta-isomerase IDI1 then catalyzes the 1,3-allylic rearrangement of the homoallylic substrate isopentenyl (IPP) to its highly electrophilic allylic isomer, dimethylallyl diphosphate (DMAPP). Finally the farnesyl diphosphate synthase ERG20 catalyzes the sequential condensation of isopentenyl pyrophosphate with dimethylallyl pyrophosphate, and then with the resultant geranylpyrophosphate to the ultimate product farnesyl pyrophosphate. The sequence is that of Diphosphomevalonate decarboxylase from Saccharomyces cerevisiae (strain ATCC 204508 / S288c) (Baker's yeast).